We begin with the raw amino-acid sequence, 174 residues long: Recombination protein RecR (174 aa).

The segment at 30–45 (CNACRTFTEEEECTIC) adopts a C4-type zinc-finger fold. In terms of domain architecture, Toprim spans 54–149 (GQLCIVEMPE…KVTRIAHGIP (96 aa)).

The protein belongs to the RecR family.

May play a role in DNA repair. It seems to be involved in an RecBC-independent recombinational process of DNA repair. It may act with RecF and RecO. The protein is Recombination protein RecR of Haemophilus ducreyi (strain 35000HP / ATCC 700724).